The primary structure comprises 1401 residues: DNA-directed RNA polymerase subunit beta' (1401 aa).

Residues cysteine 71, cysteine 73, cysteine 86, and cysteine 89 each contribute to the Zn(2+) site. Mg(2+) contacts are provided by aspartate 462, aspartate 464, and aspartate 466. 4 residues coordinate Zn(2+): cysteine 810, cysteine 884, cysteine 891, and cysteine 894. The disordered stretch occupies residues 1378–1401 (EKQATIVPSAPEPEPLALPTPEQS).

This sequence belongs to the RNA polymerase beta' chain family. As to quaternary structure, the RNAP catalytic core consists of 2 alpha, 1 beta, 1 beta' and 1 omega subunit. When a sigma factor is associated with the core the holoenzyme is formed, which can initiate transcription. Mg(2+) is required as a cofactor. It depends on Zn(2+) as a cofactor.

The enzyme catalyses RNA(n) + a ribonucleoside 5'-triphosphate = RNA(n+1) + diphosphate. Its function is as follows. DNA-dependent RNA polymerase catalyzes the transcription of DNA into RNA using the four ribonucleoside triphosphates as substrates. The polypeptide is DNA-directed RNA polymerase subunit beta' (Rhodopseudomonas palustris (strain BisB18)).